A 635-amino-acid chain; its full sequence is Biosynthetic arginine decarboxylase (635 aa).

An N6-(pyridoxal phosphate)lysine modification is found at Lys103. A substrate-binding site is contributed by 283-293 (FDVGGGLGVDY).

Belongs to the Orn/Lys/Arg decarboxylase class-II family. SpeA subfamily. Mg(2+) serves as cofactor. It depends on pyridoxal 5'-phosphate as a cofactor.

The catalysed reaction is L-arginine + H(+) = agmatine + CO2. It participates in amine and polyamine biosynthesis; agmatine biosynthesis; agmatine from L-arginine: step 1/1. Catalyzes the biosynthesis of agmatine from arginine. In Proteus mirabilis (strain HI4320), this protein is Biosynthetic arginine decarboxylase.